The chain runs to 258 residues: 5-oxoprolinase subunit A (258 aa).

It belongs to the LamB/PxpA family. Forms a complex composed of PxpA, PxpB and PxpC.

The catalysed reaction is 5-oxo-L-proline + ATP + 2 H2O = L-glutamate + ADP + phosphate + H(+). Its function is as follows. Catalyzes the cleavage of 5-oxoproline to form L-glutamate coupled to the hydrolysis of ATP to ADP and inorganic phosphate. In Corynebacterium jeikeium (strain K411), this protein is 5-oxoprolinase subunit A.